A 530-amino-acid polypeptide reads, in one-letter code: Pyridoxine/pyridoxamine 5'-phosphate oxidase 1, chloroplastic (530 aa).

Residues 1-64 constitute a chloroplast transit peptide; the sequence is MRNVIRRVTT…TLCTKVIIPN (64 aa). The residue at position 65 (Met-65) is an N-acetylmethionine. A YjeF N-terminal domain is found at 81–297; the sequence is AAEIDETLMG…SVAEKYKLEL (217 aa). 131–135 contributes to the (6S)-NADPHX binding site; it reads NNGGD. K(+)-binding residues include Asn-132 and Asp-196. (6S)-NADPHX is bound by residues 200–206 and Asp-238; that span reads GFSFHGA. K(+) is bound at residue Ser-241. 247-250 is a pyridoxal 5'-phosphate binding site; sequence EGDH. 321-324 lines the substrate pocket; that stretch reads RVNY. 325–327 is a pyridoxal 5'-phosphate binding site; it reads VSP. 374–377 provides a ligand contact to FMN; sequence RMVL. Position 379 (Lys-379) interacts with pyridoxal 5'-phosphate. FMN-binding positions include 389–390, 395–396, and Gln-418; these read FT and KK. Pyridoxal 5'-phosphate contacts are provided by Tyr-436, Arg-440, and Ser-444. FMN-binding positions include 453 to 454 and Trp-499; that span reads QS. 505-507 is a pyridoxal 5'-phosphate binding site; sequence RLH. Arg-509 is an FMN binding site.

The protein in the N-terminal section; belongs to the NnrE/AIBP family. This sequence in the C-terminal section; belongs to the pyridoxamine 5'-phosphate oxidase family. In terms of assembly, homodimer. Requires FMN as cofactor. K(+) is required as a cofactor. As to expression, expressed in leaves, stems, flowers and roots.

The protein resides in the plastid. The protein localises to the chloroplast. It carries out the reaction pyridoxamine 5'-phosphate + O2 + H2O = pyridoxal 5'-phosphate + H2O2 + NH4(+). The catalysed reaction is pyridoxine 5'-phosphate + O2 = pyridoxal 5'-phosphate + H2O2. It catalyses the reaction (6R)-NADHX = (6S)-NADHX. The enzyme catalyses (6R)-NADPHX = (6S)-NADPHX. The protein operates within cofactor metabolism; pyridoxal 5'-phosphate salvage; pyridoxal 5'-phosphate from pyridoxamine 5'-phosphate: step 1/1. It functions in the pathway cofactor metabolism; pyridoxal 5'-phosphate salvage; pyridoxal 5'-phosphate from pyridoxine 5'-phosphate: step 1/1. In terms of biological role, catalyzes the oxidation of either pyridoxine 5'-phosphate (PNP) or pyridoxamine 5'-phosphate (PMP) into pyridoxal 5'-phosphate (PLP). Involved in the PLP salvage pathway. Has a higher preference for PNP over PMP. May also catalyze the epimerization of the S- and R-forms of NAD(P)HX, a damaged form of NAD(P)H that is a result of enzymatic or heat-dependent hydration. This is a prerequisite for the S-specific NAD(P)H-hydrate dehydratase to allow the repair of both epimers of NAD(P)HX. In Arabidopsis thaliana (Mouse-ear cress), this protein is Pyridoxine/pyridoxamine 5'-phosphate oxidase 1, chloroplastic (PPOX1).